A 154-amino-acid chain; its full sequence is Interleukin-2 (154 aa).

The signal sequence occupies residues 1–20; that stretch reads MYRMQLLSCIALSLALVTNS. An O-linked (GalNAc...) threonine glycan is attached at T23. A disulfide bridge links C78 with C126.

This sequence belongs to the IL-2 family.

It localises to the secreted. Functionally, cytokine produced by activated CD4-positive helper T-cells and to a lesser extend activated CD8-positive T-cells and natural killer (NK) cells that plays pivotal roles in the immune response and tolerance. Binds to a receptor complex composed of either the high-affinity trimeric IL-2R (IL2RA/CD25, IL2RB/CD122 and IL2RG/CD132) or the low-affinity dimeric IL-2R (IL2RB and IL2RG). Interaction with the receptor leads to oligomerization and conformation changes in the IL-2R subunits resulting in downstream signaling starting with phosphorylation of JAK1 and JAK3. In turn, JAK1 and JAK3 phosphorylate the receptor to form a docking site leading to the phosphorylation of several substrates including STAT5. This process leads to activation of several pathways including STAT, phosphoinositide-3-kinase/PI3K and mitogen-activated protein kinase/MAPK pathways. Functions as a T-cell growth factor and can increase NK-cell cytolytic activity as well. Promotes strong proliferation of activated B-cells and subsequently immunoglobulin production. Plays a pivotal role in regulating the adaptive immune system by controlling the survival and proliferation of regulatory T-cells, which are required for the maintenance of immune tolerance. Moreover, participates in the differentiation and homeostasis of effector T-cell subsets, including Th1, Th2, Th17 as well as memory CD8-positive T-cells. The sequence is that of Interleukin-2 (IL2) from Macaca fascicularis (Crab-eating macaque).